The following is a 186-amino-acid chain: NADH dehydrogenase [ubiquinone] 1 beta subcomplex subunit 8, mitochondrial (186 aa).

The N-terminal 28 residues, 1–28, are a transit peptide targeting the mitochondrion; sequence MAVARAGVLGVQWLQRASRNVMPLGART. The chain crosses the membrane as a helical span at residues 133–153; the sequence is LFGFLAFMIFMCWVGDVYPVY.

Belongs to the complex I NDUFB8 subunit family. Complex I is composed of 45 different subunits.

The protein localises to the mitochondrion inner membrane. Its function is as follows. Accessory subunit of the mitochondrial membrane respiratory chain NADH dehydrogenase (Complex I), that is believed not to be involved in catalysis. Complex I functions in the transfer of electrons from NADH to the respiratory chain. The immediate electron acceptor for the enzyme is believed to be ubiquinone. The chain is NADH dehydrogenase [ubiquinone] 1 beta subcomplex subunit 8, mitochondrial (NDUFB8) from Homo sapiens (Human).